The following is a 199-amino-acid chain: Pre T-cell antigen receptor alpha (199 aa).

The N-terminal stretch at 1-16 (MARTWLLLFLGLRCQA) is a signal peptide. Topologically, residues 17–155 (LPSGIAGTPF…RQVLRLSVLR (139 aa)) are extracellular. Residues cysteine 47 and cysteine 107 are joined by a disulfide bond. N-linked (GlcNAc...) asparagine glycosylation is found at asparagine 67 and asparagine 117. A disordered region spans residues 117-139 (NRSTHPLQLSGEEASTDRTCPQE). The helical transmembrane segment at 156–176 (LLLFKLLLLDVFLTCSRLCVL) threads the bilayer. Residues 177-199 (AGQHLLPPPSSKQAPASTHQSWT) lie on the Cytoplasmic side of the membrane.

In terms of assembly, heterodimer with TCRB; disulfide linked. This heterodimer assembles with CD3 proteins into a signaling-competent pre-T-cell receptor complex. Interacts with RHBDD1. As to expression, found in CD45+ but not in the CD45- fetal liver cells.

It localises to the membrane. The protein resides in the cell membrane. Component of the pre-T-cell receptor complex (composed of PTCRA, TCRB and the CD3 complex) that has a crucial role in early T-cell development, particularly alpha-beta T cell differentiation. This Rattus norvegicus (Rat) protein is Pre T-cell antigen receptor alpha.